We begin with the raw amino-acid sequence, 453 residues long: Pentatricopeptide repeat-containing protein At2g38420, mitochondrial (453 aa).

Residues 1 to 77 (MARSSSWHRM…CEPTPQAYRF (77 aa)) constitute a mitochondrion transit peptide. PPR repeat units follow at residues 107-141 (PESI…RCVP), 142-177 (SAYT…GVRL), 178-212 (EEST…SVIV), 213-249 (DPRL…RFSP), 250-284 (GLRD…RVEP), 285-319 (DLVC…GLAP), 320-354 (DVYT…GSEP), 355-389 (NVVT…GVNR), and 390-424 (NSHT…NVFV).

The protein belongs to the PPR family. P subfamily.

The protein localises to the mitochondrion. This chain is Pentatricopeptide repeat-containing protein At2g38420, mitochondrial, found in Arabidopsis thaliana (Mouse-ear cress).